The sequence spans 735 residues: Protein argonaute (735 aa).

The segment at 1–94 (MDLLSNLRRS…LVQMGTKQLD (94 aa)) is N-terminal domain. The linker L1 stretch occupies residues 95–180 (CRNDAHRCAL…IDIHHRFYTP (86 aa)). The PAZ domain stretch occupies residues 181–284 (WTVHQWLEQY…SPSLTMEMLA (104 aa)). Positions 285–369 (KVAEDSTVCD…SKTADIRNKG (85 aa)) are linker L2. The segment at 370–498 (CAKIGETSFG…LLCKAGWQPI (129 aa)) is mid domain. The interval 499-735 (QLESVDHPEV…NISRDKLIAV (237 aa)) is PIWI domain. Residues Asp516, Glu550, Asp584, and Asp709 contribute to the active site. Residue Asp516 participates in Mn(2+) binding. Mn(2+)-binding residues include Asp584, Asp709, and Val735.

Belongs to the argonaute family. Long pAgo subfamily. In terms of assembly, copurifies with SSB proteins Synpcc7942_0079 and Synpcc7942_0301 as well as other proteins. It depends on Mn(2+) as a cofactor.

A DNA-guided ssDNA endonuclease that might play a role in defense against invading mobile genetic elements. Uses short ssDNA sequences as guides (gDNA) to bind complementary target strands, resulting in cleavage of the target DNA (tDNA). The cleavage site is 10 nucleotides (nt) downstream of the target residue base-paired with the 5'-end of the gDNA. Both 5'-P and 5'-OH gDNAs confer activity; a 5'-OH guide cleaves between nt 10-11 and nt 11-12. Guide DNA mismatches in the seed (nt 2-9) can enhance activity, mismatches 1-5 nt after the cleavage site block activity. Has no appreciable activity with guide RNA or on target RNA. In situ binds to 5'-phosphorylated DNA 14-20 nt in length; small DNA maps over the chromosome and plasmid with some preference for the replication origin and the probable termination site. Also has weak guide-independent nuclease activity on DNA called 'chopping'. Overexpression of wild-type or catalytically inactive mutant has no visible effect during growth under continuous high light for up to a month. This Synechococcus elongatus (strain ATCC 33912 / PCC 7942 / FACHB-805) (Anacystis nidulans R2) protein is Protein argonaute.